Consider the following 258-residue polypeptide: tRNA (guanine-N(7)-)-methyltransferase (258 aa).

Residues 1–42 are disordered; sequence MPETPLMRDNGPVNHADQDAPAVPEEGQTKDSKGSRLHPRVT. Residues E90, E115, D142, and D165 each coordinate S-adenosyl-L-methionine. D165 is a catalytic residue. Substrate contacts are provided by residues K169, D201, and 235-238; that span reads TKFE.

This sequence belongs to the class I-like SAM-binding methyltransferase superfamily. TrmB family.

The catalysed reaction is guanosine(46) in tRNA + S-adenosyl-L-methionine = N(7)-methylguanosine(46) in tRNA + S-adenosyl-L-homocysteine. The protein operates within tRNA modification; N(7)-methylguanine-tRNA biosynthesis. Its function is as follows. Catalyzes the formation of N(7)-methylguanine at position 46 (m7G46) in tRNA. The chain is tRNA (guanine-N(7)-)-methyltransferase from Rhodococcus jostii (strain RHA1).